The sequence spans 69 residues: UPF0337 protein ECA0631 (69 aa).

It belongs to the UPF0337 (CsbD) family.

This Pectobacterium atrosepticum (strain SCRI 1043 / ATCC BAA-672) (Erwinia carotovora subsp. atroseptica) protein is UPF0337 protein ECA0631.